The primary structure comprises 401 residues: MGRAKKVVLAYSGGVDTSVCIPYLKQEWGVEEVITFAADLGQGDELEPIRRKALEAGASQSLVGDLIQPFIEEFAFPAIRANALYEGRYPLSTALARPLIARRLVEVAREVGADAVAHGCTGKGNDQVRFDVAIAALAPDLKVLTPAREWGMSREETIAYGERCGLPAPVSKKSPYSIDLNLLGRSVEAGPLEDPMQAPPEEVFAMTVSIDAAPSEAEEIEIAFEAGNPVSINGQRLDPVALIREANRLAGSHGIGRLDMIENRVVGIKSREIYETPGLLLLIQAHQELESLTLAADVLRTKRQLEMQWADLVYQGLWFGPLKEALDGFMDRTQSEVNGVVRLRLHKGNAIVTGRGSSDSSLYVPEMASYGSEDQFDHRAAEGFIYVWGLPIRLWSAARRR.

ATP is bound by residues 10–18 (AYSGGVDTS) and alanine 38. Position 89 (tyrosine 89) interacts with L-citrulline. Residue glycine 119 coordinates ATP. 3 residues coordinate L-aspartate: threonine 121, asparagine 125, and aspartate 126. L-citrulline is bound at residue asparagine 125. Positions 129, 177, 186, 262, and 274 each coordinate L-citrulline.

The protein belongs to the argininosuccinate synthase family. Type 1 subfamily. Homotetramer.

The protein resides in the cytoplasm. The enzyme catalyses L-citrulline + L-aspartate + ATP = 2-(N(omega)-L-arginino)succinate + AMP + diphosphate + H(+). It functions in the pathway amino-acid biosynthesis; L-arginine biosynthesis; L-arginine from L-ornithine and carbamoyl phosphate: step 2/3. This is Argininosuccinate synthase from Synechococcus sp. (strain WH7803).